We begin with the raw amino-acid sequence, 801 residues long: Squamosa promoter-binding-like protein 7 (801 aa).

2 disordered regions span residues 1–23 (MSSL…LVND) and 59–91 (SPPL…DRVR). The segment at 135–212 (VARCQVPDCE…ERHNNRRKRK (78 aa)) adopts an SBP-type; atypical zinc-finger fold. Zn(2+)-binding residues include Cys138, Cys143, Cys160, Cys163, Cys179, Cys182, His186, and Cys198. Residues 195-211 (KRSCRRKLERHNNRRKR) carry the Bipartite nuclear localization signal motif. The segment covering 203–213 (ERHNNRRKRKP) has biased composition (basic residues). Disordered regions lie at residues 203–258 (ERHN…PSLI) and 286–313 (GSGE…NKSA). Positions 222–233 (EQQQVLSQNDNS) are enriched in polar residues. Over residues 249–258 (QRAEEEPSLI) the composition is skewed to basic and acidic residues. Residues 304-313 (SPSNGDNKSA) show a composition bias toward polar residues.

As to quaternary structure, homodimer. Interacts with KIN17. Interacts with HY5. Zn(2+) serves as cofactor. As to expression, expressed in roots rosette leaves, cauline leaves, stems, flowers and siliques.

The protein localises to the nucleus speckle. In terms of biological role, transcription factor that participates in reprogramming global gene expression during copper deficiency in order to improve the metal uptake and prioritize its distribution to copper proteins of major importance. Binds directly to 5'-GTAC-3' motifs in the microRNA (miRNA) promoter of the stress-responsive miRNAs miR398b and miR398c to activate their transcription. During copper deficiency, activates the copper transporters COPT1 and COPT2, and the copper chaperone CCH, directly or indirectly via miRNAs. Required for the expression of the miRNAs miR397, miR408 and miR857. Acts coordinately with HY5 to regulate miR408 and its target genes in response to changes in light and copper conditions. Activates miR857 and its target genes in response to low copper conditions. Involved in cadmium stress response by regulating miR397a, miR398b, miR398c and miR857. Required for iron homeostasis during copper deficiency. This chain is Squamosa promoter-binding-like protein 7 (SPL7), found in Arabidopsis thaliana (Mouse-ear cress).